Reading from the N-terminus, the 143-residue chain is Hemoglobin subunit alpha (143 aa).

Residues 3–143 (KLSGEDKANV…TMRLCISKYR (141 aa)) enclose the Globin domain. Histidine 60 lines the O2 pocket. Histidine 89 contributes to the heme b binding site.

It belongs to the globin family. Heterotetramer of two alpha chains and two beta chains. As to expression, red blood cells.

Functionally, involved in oxygen transport from the lung to the various peripheral tissues. The chain is Hemoglobin subunit alpha (HBA) from Ambystoma mexicanum (Axolotl).